A 123-amino-acid chain; its full sequence is Small ribosomal subunit protein uS13 (123 aa).

The interval 96–123 is disordered; it reads LPVRGQRTKTNARTRKGPKKTVGARRKK.

Belongs to the universal ribosomal protein uS13 family. In terms of assembly, part of the 30S ribosomal subunit. Forms a loose heterodimer with protein S19. Forms two bridges to the 50S subunit in the 70S ribosome.

In terms of biological role, located at the top of the head of the 30S subunit, it contacts several helices of the 16S rRNA. In the 70S ribosome it contacts the 23S rRNA (bridge B1a) and protein L5 of the 50S subunit (bridge B1b), connecting the 2 subunits; these bridges are implicated in subunit movement. Contacts the tRNAs in the A and P-sites. This chain is Small ribosomal subunit protein uS13, found in Desulforamulus reducens (strain ATCC BAA-1160 / DSM 100696 / MI-1) (Desulfotomaculum reducens).